The following is a 148-amino-acid chain: Large ribosomal subunit protein bL9 (148 aa).

Belongs to the bacterial ribosomal protein bL9 family.

Binds to the 23S rRNA. The polypeptide is Large ribosomal subunit protein bL9 (Parafrankia sp. (strain EAN1pec)).